The chain runs to 320 residues: GTP 3',8-cyclase (320 aa).

In terms of domain architecture, Radical SAM core spans 4-226 (TFQRSINYMR…PIITDATSPA (223 aa)). A GTP-binding site is contributed by R13. Residues C20 and C24 each coordinate [4Fe-4S] cluster. Residue Y26 coordinates S-adenosyl-L-methionine. Position 27 (C27) interacts with [4Fe-4S] cluster. A GTP-binding site is contributed by R63. G67 is a binding site for S-adenosyl-L-methionine. Residue T94 coordinates GTP. S118 lines the S-adenosyl-L-methionine pocket. K155 is a binding site for GTP. M189 lines the S-adenosyl-L-methionine pocket. Residues C249 and C252 each coordinate [4Fe-4S] cluster. Residue 254–256 (RIR) participates in GTP binding. C266 lines the [4Fe-4S] cluster pocket.

Belongs to the radical SAM superfamily. MoaA family. As to quaternary structure, monomer and homodimer. Requires [4Fe-4S] cluster as cofactor.

It catalyses the reaction GTP + AH2 + S-adenosyl-L-methionine = (8S)-3',8-cyclo-7,8-dihydroguanosine 5'-triphosphate + 5'-deoxyadenosine + L-methionine + A + H(+). It participates in cofactor biosynthesis; molybdopterin biosynthesis. Its function is as follows. Catalyzes the cyclization of GTP to (8S)-3',8-cyclo-7,8-dihydroguanosine 5'-triphosphate. This Alkaliphilus metalliredigens (strain QYMF) protein is GTP 3',8-cyclase.